A 124-amino-acid chain; its full sequence is Ribonuclease pancreatic (124 aa).

A compositionally biased stretch (basic and acidic residues) spans 1 to 13 (SETAAEKFERQHM). Residues 1-23 (SETAAEKFERQHMDSYSSSSSNS) form a disordered region. 2 residues coordinate substrate: K7 and R10. The active-site Proton acceptor is the H12. 4 disulfides stabilise this stretch: C26–C84, C40–C95, C58–C110, and C65–C72. Substrate-binding positions include 41–45 (KPVNT), K66, and R85. H119 functions as the Proton donor in the catalytic mechanism.

Belongs to the pancreatic ribonuclease family. Monomer. Interacts with and forms tight 1:1 complexes with RNH1. Dimerization of two such complexes may occur. Interaction with RNH1 inhibits this protein. As to expression, pancreas.

It localises to the secreted. The catalysed reaction is an [RNA] containing cytidine + H2O = an [RNA]-3'-cytidine-3'-phosphate + a 5'-hydroxy-ribonucleotide-3'-[RNA].. It carries out the reaction an [RNA] containing uridine + H2O = an [RNA]-3'-uridine-3'-phosphate + a 5'-hydroxy-ribonucleotide-3'-[RNA].. In terms of biological role, endonuclease that catalyzes the cleavage of RNA on the 3' side of pyrimidine nucleotides. Acts on single-stranded and double-stranded RNA. The protein is Ribonuclease pancreatic (RNASE1) of Camelus bactrianus (Bactrian camel).